A 401-amino-acid chain; its full sequence is 8-amino-7-oxononanoate synthase (401 aa).

Residue arginine 24 participates in substrate binding. Pyridoxal 5'-phosphate is bound at residue 111–112; that stretch reads GF. Histidine 137 serves as a coordination point for substrate. Residues serine 183, histidine 211, and threonine 240 each coordinate pyridoxal 5'-phosphate. Residue lysine 243 is modified to N6-(pyridoxal phosphate)lysine. Threonine 357 serves as a coordination point for substrate.

The protein belongs to the class-II pyridoxal-phosphate-dependent aminotransferase family. BioF subfamily. As to quaternary structure, homodimer. Pyridoxal 5'-phosphate serves as cofactor.

The enzyme catalyses 6-carboxyhexanoyl-[ACP] + L-alanine + H(+) = (8S)-8-amino-7-oxononanoate + holo-[ACP] + CO2. It functions in the pathway cofactor biosynthesis; biotin biosynthesis. Functionally, catalyzes the decarboxylative condensation of pimeloyl-[acyl-carrier protein] and L-alanine to produce 8-amino-7-oxononanoate (AON), [acyl-carrier protein], and carbon dioxide. In Xylella fastidiosa (strain 9a5c), this protein is 8-amino-7-oxononanoate synthase.